The primary structure comprises 466 residues: CBL-interacting protein kinase 20 (466 aa).

One can recognise a Protein kinase domain in the interval 12 to 276 (YELGRSLGHG…IDELVKHPWF (265 aa)). ATP is bound by residues 18 to 26 (LGHGTFSKV) and K41. D139 functions as the Proton acceptor in the catalytic mechanism. Residues 162 to 191 (DFGLSALSASRRHDGLLHTTCGTPSYVAPE) form an activation loop region. Positions 297-329 (KPANAAMNMKPASLNAFDIISLSQGFDLSGMFC) constitute an NAF domain. The tract at residues 337–366 (TQDQLFVTGKPATAIVSRLEEIAETEHFTV) is PPI. The tract at residues 446-466 (ASEKNQLPAVSEVSPLSSPRN) is disordered.

This sequence belongs to the protein kinase superfamily. CAMK Ser/Thr protein kinase family. SNF1 subfamily. The cofactor is Mn(2+).

The catalysed reaction is L-seryl-[protein] + ATP = O-phospho-L-seryl-[protein] + ADP + H(+). It catalyses the reaction L-threonyl-[protein] + ATP = O-phospho-L-threonyl-[protein] + ADP + H(+). CIPK serine-threonine protein kinases interact with CBL proteins. Binding of a CBL protein to the regulatory NAF domain of CIPK protein lead to the activation of the kinase in a calcium-dependent manner. The sequence is that of CBL-interacting protein kinase 20 (CIPK20) from Oryza sativa subsp. japonica (Rice).